A 225-amino-acid polypeptide reads, in one-letter code: Putative ankyrin repeat protein RBE_1025 (225 aa).

4 ANK repeats span residues 6-35, 41-71, 75-120, and 124-153; these read LSKDLLLSARANNNLAVIRILQDTTSAINP, NGKTALHWAVINLNPLITCYILKIEKVNVNI, TGFT…DVNI, and KGNTALHYAICKNNFFFIEELLSNNASPFI.

The protein is Putative ankyrin repeat protein RBE_1025 of Rickettsia bellii (strain RML369-C).